A 1939-amino-acid polypeptide reads, in one-letter code: Myosin-1 (1939 aa).

A Myosin N-terminal SH3-like domain is found at 33–82 (DAKTSVFVAEPKESFVKGTVQSREGGKVTVKTEAGATLTVKEDQVFPMNP). A phosphothreonine mark is found at Thr-64 and Thr-69. A Myosin motor domain is found at 86 to 782 (DKIEDMAMMT…LLGLLEEMRD (697 aa)). At Lys-130 the chain carries N6,N6,N6-trimethyllysine. 179–186 (GESGAGKT) is an ATP binding site. Tyr-389 is modified (phosphotyrosine). Ser-392 is subject to Phosphoserine. Position 419 is a phosphothreonine (Thr-419). Residue Tyr-424 is modified to Phosphotyrosine. The residue at position 625 (Ser-625) is a Phosphoserine. Positions 659-681 (LNKLMTNLRSTHPHFVRCIIPNE) are actin-binding. His-757 carries the pros-methylhistidine modification. The tract at residues 761–775 (KFGHTKVFFKAGLLG) is actin-binding. Residues 785-814 (LAQLITRTQARCRGFLARVEYQKMVERRES) enclose the IQ domain. Positions 843 to 1939 (LLKSAETEKE…EVHTKIISEE (1097 aa)) form a coiled coil. Residues Ser-1092 and Ser-1096 each carry the phosphoserine modification. Disordered stretches follow at residues 1125–1147 (EIEA…SREL) and 1153–1172 (RLEE…KKRE). The span at 1128–1147 (AERASRAKAEKQRSDLSREL) shows a compositional bias: basic and acidic residues. Phosphoserine is present on residues Ser-1162 and Ser-1237. Position 1241 is a phosphothreonine (Thr-1241). Ser-1243 is modified (phosphoserine). Residue Thr-1255 is modified to Phosphothreonine. Ser-1261 is modified (phosphoserine). Phosphothreonine is present on residues Thr-1265 and Thr-1286. 4 positions are modified to phosphoserine: Ser-1288, Ser-1292, Ser-1303, and Ser-1306. Residue Tyr-1464 is modified to Phosphotyrosine. Position 1467 is a phosphothreonine (Thr-1467). Ser-1474 is modified (phosphoserine). Phosphotyrosine is present on Tyr-1492. Ser-1495 is modified (phosphoserine). Position 1501 is a phosphothreonine (Thr-1501). Ser-1514 bears the Phosphoserine mark. Thr-1517 carries the phosphothreonine modification. Residues Ser-1554, Ser-1574, Ser-1600, Ser-1603, Ser-1714, and Ser-1726 each carry the phosphoserine modification. Thr-1730 and Thr-1736 each carry phosphothreonine. Position 1739 is a phosphoserine (Ser-1739).

Belongs to the TRAFAC class myosin-kinesin ATPase superfamily. Myosin family. In terms of assembly, muscle myosin is a hexameric protein that consists of 2 heavy chain subunits (MHC), 2 alkali light chain subunits (MLC) and 2 regulatory light chain subunits (MLC-2). Interacts with SLC26A5.

It localises to the cytoplasm. It is found in the myofibril. Required for normal hearing. It plays a role in cochlear amplification of auditory stimuli, likely through the positive regulation of prestin (SLC26A5) activity and outer hair cell (OHC) electromotility. This is Myosin-1 (MYH1) from Canis lupus familiaris (Dog).